The primary structure comprises 367 residues: S-adenosylmethionine:tRNA ribosyltransferase-isomerase (367 aa).

This sequence belongs to the QueA family. Monomer.

The protein resides in the cytoplasm. The enzyme catalyses 7-aminomethyl-7-carbaguanosine(34) in tRNA + S-adenosyl-L-methionine = epoxyqueuosine(34) in tRNA + adenine + L-methionine + 2 H(+). The protein operates within tRNA modification; tRNA-queuosine biosynthesis. In terms of biological role, transfers and isomerizes the ribose moiety from AdoMet to the 7-aminomethyl group of 7-deazaguanine (preQ1-tRNA) to give epoxyqueuosine (oQ-tRNA). The protein is S-adenosylmethionine:tRNA ribosyltransferase-isomerase of Beijerinckia indica subsp. indica (strain ATCC 9039 / DSM 1715 / NCIMB 8712).